A 73-amino-acid chain; its full sequence is Tetrahydromethanopterin S-methyltransferase subunit F (73 aa).

The helical transmembrane segment at 52-72 (IGFAAGFLFSLLMVIVLPLLF) threads the bilayer.

Belongs to the MtrF family. As to quaternary structure, the complex is composed of 8 subunits; MtrA, MtrB, MtrC, MtrD, MtrE, MtrF, MtrG and MtrH.

It localises to the cell membrane. The catalysed reaction is 5-methyl-5,6,7,8-tetrahydromethanopterin + coenzyme M + 2 Na(+)(in) = 5,6,7,8-tetrahydromethanopterin + methyl-coenzyme M + 2 Na(+)(out). It participates in one-carbon metabolism; methanogenesis from CO(2); methyl-coenzyme M from 5,10-methylene-5,6,7,8-tetrahydromethanopterin: step 2/2. Functionally, part of a complex that catalyzes the formation of methyl-coenzyme M and tetrahydromethanopterin from coenzyme M and methyl-tetrahydromethanopterin. This is an energy-conserving, sodium-ion translocating step. The polypeptide is Tetrahydromethanopterin S-methyltransferase subunit F (Methanosarcina barkeri (strain Fusaro / DSM 804)).